The following is a 471-amino-acid chain: Glutamate--tRNA ligase (471 aa).

The 'HIGH' region motif lies at Pro9 to Gly19. Zn(2+)-binding residues include Cys98, Cys100, Cys125, and Asp127. Positions Lys237–Arg241 match the 'KMSKS' region motif. ATP is bound at residue Lys240.

This sequence belongs to the class-I aminoacyl-tRNA synthetase family. Glutamate--tRNA ligase type 1 subfamily. Monomer. The cofactor is Zn(2+).

It localises to the cytoplasm. It catalyses the reaction tRNA(Glu) + L-glutamate + ATP = L-glutamyl-tRNA(Glu) + AMP + diphosphate. Functionally, catalyzes the attachment of glutamate to tRNA(Glu) in a two-step reaction: glutamate is first activated by ATP to form Glu-AMP and then transferred to the acceptor end of tRNA(Glu). The chain is Glutamate--tRNA ligase from Yersinia enterocolitica serotype O:8 / biotype 1B (strain NCTC 13174 / 8081).